The sequence spans 380 residues: tRNA pseudouridine synthase B (380 aa).

Asp-63 acts as the Nucleophile in catalysis. Residues Gln-309 to Asn-339 form a disordered region. Acidic residues predominate over residues Val-311 to Asp-338.

Belongs to the pseudouridine synthase TruB family. Type 1 subfamily.

The catalysed reaction is uridine(55) in tRNA = pseudouridine(55) in tRNA. Responsible for synthesis of pseudouridine from uracil-55 in the psi GC loop of transfer RNAs. This chain is tRNA pseudouridine synthase B, found in Psychrobacter arcticus (strain DSM 17307 / VKM B-2377 / 273-4).